The chain runs to 480 residues: Protein nucleotidyltransferase YdiU (480 aa).

The ATP site is built by glycine 86, glycine 88, arginine 89, lysine 109, aspartate 121, glycine 122, arginine 172, and arginine 179. The Proton acceptor role is filled by aspartate 248. Mg(2+) contacts are provided by asparagine 249 and aspartate 258. Aspartate 258 lines the ATP pocket.

It belongs to the SELO family. The cofactor is Mg(2+). Requires Mn(2+) as cofactor.

The enzyme catalyses L-seryl-[protein] + ATP = 3-O-(5'-adenylyl)-L-seryl-[protein] + diphosphate. The catalysed reaction is L-threonyl-[protein] + ATP = 3-O-(5'-adenylyl)-L-threonyl-[protein] + diphosphate. It carries out the reaction L-tyrosyl-[protein] + ATP = O-(5'-adenylyl)-L-tyrosyl-[protein] + diphosphate. It catalyses the reaction L-histidyl-[protein] + UTP = N(tele)-(5'-uridylyl)-L-histidyl-[protein] + diphosphate. The enzyme catalyses L-seryl-[protein] + UTP = O-(5'-uridylyl)-L-seryl-[protein] + diphosphate. The catalysed reaction is L-tyrosyl-[protein] + UTP = O-(5'-uridylyl)-L-tyrosyl-[protein] + diphosphate. Functionally, nucleotidyltransferase involved in the post-translational modification of proteins. It can catalyze the addition of adenosine monophosphate (AMP) or uridine monophosphate (UMP) to a protein, resulting in modifications known as AMPylation and UMPylation. The polypeptide is Protein nucleotidyltransferase YdiU (Salmonella choleraesuis (strain SC-B67)).